Here is a 1279-residue protein sequence, read N- to C-terminus: Myosin-1 (1279 aa).

The span at 1-12 (MAIVKRGGRTRA) shows a compositional bias: basic residues. The disordered stretch occupies residues 1 to 25 (MAIVKRGGRTRAKQQQAPAKVNNGL). The Myosin motor domain occupies 48–736 (VGVSDLTLLS…TLFALEDMRD (689 aa)). Position 141–148 (141–148 (GESGAGKT)) interacts with ATP. The residue at position 371 (Ser-371) is a Phosphoserine. The segment at 419–502 (SIGILDIYGF…PGLFAALNDS (84 aa)) is actin-binding. 2 consecutive IQ domains span residues 740–760 (HNMAARIQRAWRRYIKRKEDA) and 761–786 (AKTIQRAWRMKNHGNQFEQFRDYGNS). The TH1 domain occupies 794–984 (RRRFSMLGSR…SGTVTVNQGL (191 aa)). Composition is skewed to polar residues over residues 980 to 989 (VNQGLPPTSK) and 1018 to 1027 (AFQSQPTASY). Disordered stretches follow at residues 980-1001 (VNQGLPPTSKNPKRPRAKLGKV), 1014-1132 (LAQP…PKHP), 1189-1216 (SPSASAATQSYAPTTASSNPVSTASSNT), and 1253-1279 (LADALKKRQGVTRDDSDAEDDDDDDDW). Low complexity-rich tracts occupy residues 1038–1056 (TQLYATQHQPQQPQVPTRT) and 1067–1095 (STQTAAQVSTLPQAARKPAAPARPAKKIA). Pro residues predominate over residues 1116-1126 (APPPPPPPPAL). The region spanning 1129-1189 (PKHPTYRAMY…PIDYLQEESS (61 aa)) is the SH3 domain. Residues 1189–1209 (SPSASAATQSYAPTTASSNPV) are compositionally biased toward polar residues. Positions 1268-1279 (SDAEDDDDDDDW) are enriched in acidic residues.

Belongs to the TRAFAC class myosin-kinesin ATPase superfamily. Myosin family. Post-translationally, phosphorylation of the TEDS site (Ser-371) is required for the polarization of the actin cytoskeleton. Phosphorylation probably activates the myosin-I ATPase activity.

It is found in the cytoplasm. The protein resides in the cytoskeleton. Its subcellular location is the actin patch. Its function is as follows. Type-I myosin implicated in the organization of the actin cytoskeleton. Required for proper actin cytoskeleton polarization. At the cell cortex, assembles in patch-like structures together with proteins from the actin-polymerizing machinery and promotes actin assembly. Functions as actin nucleation-promoting factor (NPF) for the Arp2/3 complex. This chain is Myosin-1 (MYO1), found in Lodderomyces elongisporus (strain ATCC 11503 / CBS 2605 / JCM 1781 / NBRC 1676 / NRRL YB-4239) (Yeast).